Here is a 378-residue protein sequence, read N- to C-terminus: Beta-1,3-galactosyltransferase 4 (378 aa).

The Cytoplasmic portion of the chain corresponds to 1–8 (MQLRLFRR). A helical; Signal-anchor for type II membrane protein transmembrane segment spans residues 9–19 (LLLAALLLVIV). The Lumenal portion of the chain corresponds to 20–378 (WTLFGPSGLG…RCRAIAWLQS (359 aa)). N149 carries an N-linked (GlcNAc...) asparagine glycan.

This sequence belongs to the glycosyltransferase 31 family. Highly expressed in heart, skeletal muscle and pancreas and, to a lesser extent, in brain, placenta, kidney, liver and lung.

Its subcellular location is the golgi apparatus membrane. The enzyme catalyses a ganglioside GM2 (d18:1(4E)) + UDP-alpha-D-galactose = a ganglioside GM1 (d18:1(4E)) + UDP + H(+). The catalysed reaction is a ganglioside GM2 + UDP-alpha-D-galactose = a ganglioside GM1 + UDP + H(+). It carries out the reaction a ganglioside GD2 (d18:1(4E)) + UDP-alpha-D-galactose = a ganglioside GD1b (d18:1(4E)) + UDP + H(+). It catalyses the reaction a ganglioside GA2 (d18:1(4E)) + UDP-alpha-D-galactose = a ganglioside GA1 (d18:1(4E)) + UDP + H(+). It participates in protein modification; protein glycosylation. Functionally, involved in GM1/GD1B/GA1 ganglioside biosynthesis. In Homo sapiens (Human), this protein is Beta-1,3-galactosyltransferase 4.